The sequence spans 644 residues: Threonine--tRNA ligase (644 aa).

The TGS domain maps to 3–64 (EMIRITFPDG…QEDGSISIIT (62 aa)). Residues 245–542 (DHRKLGKELE…LIEEYKGAFP (298 aa)) are catalytic. Positions 338, 389, and 519 each coordinate Zn(2+).

Belongs to the class-II aminoacyl-tRNA synthetase family. As to quaternary structure, homodimer. Requires Zn(2+) as cofactor.

The protein resides in the cytoplasm. The catalysed reaction is tRNA(Thr) + L-threonine + ATP = L-threonyl-tRNA(Thr) + AMP + diphosphate + H(+). Catalyzes the attachment of threonine to tRNA(Thr) in a two-step reaction: L-threonine is first activated by ATP to form Thr-AMP and then transferred to the acceptor end of tRNA(Thr). Also edits incorrectly charged L-seryl-tRNA(Thr). This Geobacillus sp. (strain WCH70) protein is Threonine--tRNA ligase.